A 133-amino-acid chain; its full sequence is Small ribosomal subunit protein bS6 (133 aa).

This sequence belongs to the bacterial ribosomal protein bS6 family.

In terms of biological role, binds together with bS18 to 16S ribosomal RNA. The protein is Small ribosomal subunit protein bS6 of Chlorobium phaeovibrioides (strain DSM 265 / 1930) (Prosthecochloris vibrioformis (strain DSM 265)).